Reading from the N-terminus, the 146-residue chain is SecB-like chaperone SmegB (146 aa).

Belongs to the SecB-like family.

Functionally, chaperone component of an orphan antitoxin chaperone (AC) system; there is no toxin gene in close genomic proximity. When expressed in E.coli complements the cold-sensitive phenotype of a secB deletion, suggesting it may have a generic chaperone function. Does not however complement the toxin-neutralizing effect of its M.tuberculosis paralog Rv1957 (AC P95257) in E.coli, probably because the antitoxin genes are not from the same family. The polypeptide is SecB-like chaperone SmegB (Mycolicibacterium smegmatis (strain ATCC 700084 / mc(2)155) (Mycobacterium smegmatis)).